A 308-amino-acid chain; its full sequence is tRNA dimethylallyltransferase (308 aa).

10–17 (GPTGVGKT) provides a ligand contact to ATP. 12 to 17 (TGVGKT) contributes to the substrate binding site. The segment at 35–38 (DSRQ) is interaction with substrate tRNA.

Belongs to the IPP transferase family. In terms of assembly, monomer. Mg(2+) is required as a cofactor.

The catalysed reaction is adenosine(37) in tRNA + dimethylallyl diphosphate = N(6)-dimethylallyladenosine(37) in tRNA + diphosphate. Its function is as follows. Catalyzes the transfer of a dimethylallyl group onto the adenine at position 37 in tRNAs that read codons beginning with uridine, leading to the formation of N6-(dimethylallyl)adenosine (i(6)A). This is tRNA dimethylallyltransferase from Fervidobacterium nodosum (strain ATCC 35602 / DSM 5306 / Rt17-B1).